A 439-amino-acid chain; its full sequence is Xaa-Pro dipeptidase (439 aa).

Positions 244, 255, 335, 380, and 419 each coordinate Mn(2+).

Belongs to the peptidase M24B family. Bacterial-type prolidase subfamily. Mn(2+) serves as cofactor.

The enzyme catalyses Xaa-L-Pro dipeptide + H2O = an L-alpha-amino acid + L-proline. In terms of biological role, splits dipeptides with a prolyl residue in the C-terminal position. This Shewanella sp. (strain MR-4) protein is Xaa-Pro dipeptidase.